Consider the following 276-residue polypeptide: Large ribosomal subunit protein uL2 (276 aa).

2 disordered regions span residues 1–20 (MGIKKYNPTTNGRRNMTTND) and 219–276 (TVRG…RRKK). The segment covering 7–20 (NPTTNGRRNMTTND) has biased composition (polar residues).

This sequence belongs to the universal ribosomal protein uL2 family. In terms of assembly, part of the 50S ribosomal subunit. Forms a bridge to the 30S subunit in the 70S ribosome.

Its function is as follows. One of the primary rRNA binding proteins. Required for association of the 30S and 50S subunits to form the 70S ribosome, for tRNA binding and peptide bond formation. It has been suggested to have peptidyltransferase activity; this is somewhat controversial. Makes several contacts with the 16S rRNA in the 70S ribosome. This chain is Large ribosomal subunit protein uL2, found in Bacillus mycoides (strain KBAB4) (Bacillus weihenstephanensis).